A 314-amino-acid chain; its full sequence is Endolytic peptidoglycan transglycosylase RlpA (314 aa).

The first 19 residues, 1 to 19, serve as a signal peptide directing secretion; it reads MGWALKKVCFLGVIFLISA. C20 carries N-palmitoyl cysteine lipidation. C20 is lipidated: S-diacylglycerol cysteine. One can recognise an SPOR domain in the interval 241-314; it reads SVSGGKFSLQ…YNQNAVLTRE (74 aa).

This sequence belongs to the RlpA family.

The protein localises to the cell membrane. Its function is as follows. Lytic transglycosylase with a strong preference for naked glycan strands that lack stem peptides. The sequence is that of Endolytic peptidoglycan transglycosylase RlpA from Helicobacter pylori (strain J99 / ATCC 700824) (Campylobacter pylori J99).